The chain runs to 199 residues: Recombination protein RecR (199 aa).

The C4-type zinc-finger motif lies at 58-73; the sequence is CVNCGNIGTGDLCEIC. In terms of domain architecture, Toprim spans 81-176; that stretch reads GEICVVEDVA…TLSSLAQGVP (96 aa).

It belongs to the RecR family.

Functionally, may play a role in DNA repair. It seems to be involved in an RecBC-independent recombinational process of DNA repair. It may act with RecF and RecO. The chain is Recombination protein RecR from Jannaschia sp. (strain CCS1).